A 144-amino-acid chain; its full sequence is Short-chain diamines transporter (144 aa).

The next 4 helical transmembrane spans lie at 9–29 (IHAISYEGILLVIIAIALSFI), 35–55 (EVTGTLGVFMAVVSVFWNMIF), 76–96 (ILHAIGFEGGLLIATVPMIAY), and 103–123 (IDAFILDIGLTLCILVYTFIF).

Belongs to the proteobacterial antimicrobial compound efflux (PACE) (TC 2.A.117) family. In terms of assembly, exists in a monomer-homodimer equilibrium. The dimer is probably the functional form of the protein, and the assembly of the dimer is mediated by binding of chlorhexidine and promoted by high pH conditions.

The protein resides in the cell inner membrane. With respect to regulation, protonation/deprotonation of Glu-15 may play an important role in transporter function. Cadaverin transport is inhibited in the presence of CCCP. Functionally, mediates the efflux of short-chain diamines when energized by an electrochemical gradient. Recognizes specifically the short-chain diamines cadaverine and putrescine as substrates, and promotes the active transport of these substrates in exchange for a cation. Protons are probably the primary source of energy for transport, however it was not possible to conclude with complete certainty that protons, rather than alternative cations such as Na(+) ions, are exchanged for substrates by AceI. In addition, is involved in resistance to the synthetic biocide chlorhexidine, a widely used antiseptic and disinfectant in both hospital and community settings. Interacts directly with chlorhexidine and mediates its efflux via an energy-dependent mechanism. The protein is Short-chain diamines transporter of Acinetobacter baumannii (strain ATCC 17978 / DSM 105126 / CIP 53.77 / LMG 1025 / NCDC KC755 / 5377).